The sequence spans 263 residues: ATP synthase subunit a (263 aa).

A run of 5 helical transmembrane segments spans residues 31 to 51 (LDTL…FYSI), 89 to 109 (IGSL…MDLI), 133 to 153 (DPNA…VYTF), 205 to 225 (LFGN…LPFW), and 235 to 255 (AIFH…LTIV).

This sequence belongs to the ATPase A chain family. As to quaternary structure, F-type ATPases have 2 components, CF(1) - the catalytic core - and CF(0) - the membrane proton channel. CF(1) has five subunits: alpha(3), beta(3), gamma(1), delta(1), epsilon(1). CF(0) has three main subunits: a(1), b(2) and c(9-12). The alpha and beta chains form an alternating ring which encloses part of the gamma chain. CF(1) is attached to CF(0) by a central stalk formed by the gamma and epsilon chains, while a peripheral stalk is formed by the delta and b chains.

Its subcellular location is the cell inner membrane. In terms of biological role, key component of the proton channel; it plays a direct role in the translocation of protons across the membrane. The protein is ATP synthase subunit a of Dichelobacter nodosus (strain VCS1703A).